The chain runs to 335 residues: Deoxyhypusine hydroxylase (335 aa).

HEAT-like PBS-type repeat units follow at residues 74–100 (LKHE…VLED), 107–133 (CRHE…LRDD), 203–233 (KRYR…LAEG), 241–267 (FRHE…TLSD), and 274–301 (VRHE…FVND). Fe cation is bound by residues His-76, Glu-77, His-109, and Glu-110. The Fe cation site is built by His-243, Glu-244, His-276, and Glu-277.

The protein belongs to the deoxyhypusine hydroxylase family. Fe(2+) serves as cofactor.

Its subcellular location is the cytoplasm. It is found in the nucleus. It catalyses the reaction [eIF5A protein]-deoxyhypusine + AH2 + O2 = [eIF5A protein]-hypusine + A + H2O. The protein operates within protein modification; eIF5A hypusination. Catalyzes the hydroxylation of the N(6)-(4-aminobutyl)-L-lysine intermediate to form hypusine, an essential post-translational modification only found in mature eIF-5A factor. The polypeptide is Deoxyhypusine hydroxylase (Coccidioides immitis (strain RS) (Valley fever fungus)).